The chain runs to 427 residues: MFFTCGPNEAMVVSGFCRSPPVMVAGGRVFVLPCIQQIQRISLNTLTLNVKSEKVYTRHGVPISVTGIAQVKIQGQNKEMLAAACQMFLGKTEAEIAHIALETLEGHQRAIMAHMTVEEIYKDRQKFSEQVFKVASSDLVNMGISVVSYTLKDIHDDQDYLHSLGKARTAQVQKDARIGEAEAKRDAGIREAKAKQEKVSAQYLSEIEMAKAQRDYELKKAAYDIEVNTRRAQADLAYQLQVAKTKQQIEEQRVQVQVVERAQQVAVQEQEIARREKELEARVRKPAEAERYKLERLAEAEKSQLIMQAEAEAEAVRMRGEAEAFAIGARARAEAEQMAKKAEAFQLYQEAAQLDMLLEKLPQVAEEISGPLTSANKITLVSSGSGAMGAAKVTGEVLDILSRLPESVERLTGVSISQVNHKPLRTA.

3 positions are modified to phosphoserine: Ser-19, Ser-163, and Ser-385.

The protein belongs to the band 7/mec-2 family. Flotillin subfamily. Heterooligomeric complex of flotillin-1 and flotillin-2 and caveolin-1 and caveolin-2. Interacts with ECPAS.

It is found in the cell membrane. Its subcellular location is the endosome. It localises to the membrane. The protein resides in the caveola. The protein localises to the melanosome. It is found in the membrane raft. Its function is as follows. May act as a scaffolding protein within caveolar membranes, functionally participating in formation of caveolae or caveolae-like vesicles. The protein is Flotillin-1 (FLOT1) of Bos taurus (Bovine).